A 269-amino-acid polypeptide reads, in one-letter code: Imidazole glycerol phosphate synthase subunit HisF (269 aa).

Residues D23 and D142 contribute to the active site.

The protein belongs to the HisA/HisF family. As to quaternary structure, heterodimer of HisH and HisF.

It localises to the cytoplasm. It carries out the reaction 5-[(5-phospho-1-deoxy-D-ribulos-1-ylimino)methylamino]-1-(5-phospho-beta-D-ribosyl)imidazole-4-carboxamide + L-glutamine = D-erythro-1-(imidazol-4-yl)glycerol 3-phosphate + 5-amino-1-(5-phospho-beta-D-ribosyl)imidazole-4-carboxamide + L-glutamate + H(+). Its pathway is amino-acid biosynthesis; L-histidine biosynthesis; L-histidine from 5-phospho-alpha-D-ribose 1-diphosphate: step 5/9. IGPS catalyzes the conversion of PRFAR and glutamine to IGP, AICAR and glutamate. The HisF subunit catalyzes the cyclization activity that produces IGP and AICAR from PRFAR using the ammonia provided by the HisH subunit. The sequence is that of Imidazole glycerol phosphate synthase subunit HisF from Bordetella parapertussis (strain 12822 / ATCC BAA-587 / NCTC 13253).